The chain runs to 111 residues: MDIKSQTLYLNLSEAYKDPEVKANEFLSKLVVQCAGKLTASNSENSYIEVISLLSRGISSYYLSHKRIIPSSMLTIYTQIQKDIKNGNIDTEKLRKYEIAKGLMSVPYIYF.

Functionally, could impart immunity to carnobacteriocin-B2 to naturally sensitive host strains. The chain is Putative carnobacteriocin-B2 immunity protein from Carnobacterium maltaromaticum (Carnobacterium piscicola).